The sequence spans 345 residues: Myb/SANT-like DNA-binding domain-containing protein 4 (345 aa).

The Myb-like domain maps to 4–77 (LKRKRKSNFS…EVKRRYLDWR (74 aa)). A Glycyl lysine isopeptide (Lys-Gly) (interchain with G-Cter in SUMO2) cross-link involves residue Lys9. Position 106 is a phosphoserine (Ser106). Residues Lys114 and Lys142 each participate in a glycyl lysine isopeptide (Lys-Gly) (interchain with G-Cter in SUMO2) cross-link. The disordered stretch occupies residues 143-175 (VEEEERDPQSPEFEIEEEEEMLSSVIPDSRREN). Thr188 is subject to Phosphothreonine. Positions 203 to 345 (LLVNIEKQKL…LRIQKEGHLQ (143 aa)) form a coiled coil. Residues Lys237, Lys254, and Lys273 each participate in a glycyl lysine isopeptide (Lys-Gly) (interchain with G-Cter in SUMO2) cross-link.

The polypeptide is Myb/SANT-like DNA-binding domain-containing protein 4 (MSANTD4) (Homo sapiens (Human)).